Consider the following 285-residue polypeptide: MTVFADILDTVRRHEPVVHCITNYVTVNDCANMVLAAGGSPIMADDAAEVEDIVALSQALVINIGTLNSRTVESMLVAGRRANSMGKPVVLDPVGAGASALRNSTLQRLLGEVRFAAIKGNASEIGFLAGKDAKARGVDAQDSCLVTEDRLESAAATARHLSESTGAVVVVSGAIDIVAYSGGAWAVRNGHPLMARITGSGCMSAAVMGCCLGVAPYEMPQACLCAVSALGVAGEIAAETMVGGGGEMGGLGGGTGSYRALLLDAMSLLDGLALGSRADVTRIQM.

M43 serves as a coordination point for substrate. Residues K119 and S172 each contribute to the ATP site. Residue G199 participates in substrate binding.

Belongs to the Thz kinase family. The cofactor is Mg(2+).

It catalyses the reaction 5-(2-hydroxyethyl)-4-methylthiazole + ATP = 4-methyl-5-(2-phosphooxyethyl)-thiazole + ADP + H(+). It participates in cofactor biosynthesis; thiamine diphosphate biosynthesis; 4-methyl-5-(2-phosphoethyl)-thiazole from 5-(2-hydroxyethyl)-4-methylthiazole: step 1/1. Its function is as follows. Catalyzes the phosphorylation of the hydroxyl group of 4-methyl-5-beta-hydroxyethylthiazole (THZ). The polypeptide is Hydroxyethylthiazole kinase (Desulfovibrio desulfuricans (strain ATCC 27774 / DSM 6949 / MB)).